A 631-amino-acid polypeptide reads, in one-letter code: Shootin-1 (631 aa).

Position 1 is an N-acetylmethionine (Met1). Phosphoserine is present on residues Ser3 and Ser4. The stretch at 7–353 (EKQLQLITSL…RVNQSENSVP (347 aa)) forms a coiled coil. Ser101 is modified (phosphoserine; by PAK1). The residue at position 249 (Ser249) is a Phosphoserine. 2 disordered regions span residues 343 to 404 (KRVN…EVTD) and 417 to 508 (IKKG…KSMP). Residues 352-369 (VPPPPPPPPPLPPPPPNP) show a composition bias toward pro residues. Ser375 bears the Phosphoserine mark. A compositionally biased stretch (polar residues) spans 456-465 (LNKSTSSRSL). Position 473 is a phosphoserine (Ser473). Position 487 is a phosphothreonine (Thr487). Positions 490-505 (ADSSSPTGILATSESK) are enriched in polar residues. Ser494 bears the Phosphoserine mark. Thr496 is subject to Phosphothreonine. A phosphoserine mark is found at Ser506 and Ser515. Residues 530–631 (FNNPCPLTPE…KTGETDSSNC (102 aa)) are disordered. Thr537 carries the post-translational modification Phosphothreonine. Residues 590–602 (PQTKDQAAEKDPT) are compositionally biased toward basic and acidic residues.

Belongs to the shootin family. Interacts with L1CAM; this interaction occurs at axonal growth cones. Interacts with actin filament retrograde flow; this interaction is enhanced in a netrin-1- and PAK1-dependent manner and promotes F-actin-substrate coupling and concomitant formation of traction forces at axonal growth cones. Interacts with RUFY3. Interacts with PFN2. Interacts (via N-terminus) with KIF20B; this interaction is direct and promotes the association of SHTN1 to microtubules in primary neurons. Associates with microtubule. In terms of processing, phosphorylated on Ser-101 and Ser-249 by PAK1 through a CDC42- and RAC1-dependent signaling pathway, which enhances its association with F-actin retrograde flow in filopodia and lamellipodia of axonal growth cones. Phosphorylation on Ser-101 and Ser-249 is increased by netrin-1. Expressed in hippocampal neurons.

It localises to the perikaryon. It is found in the cell projection. Its subcellular location is the axon. The protein resides in the growth cone. The protein localises to the cytoplasm. It localises to the cytoskeleton. It is found in the filopodium. Its subcellular location is the lamellipodium. In terms of biological role, involved in the generation of internal asymmetric signals required for neuronal polarization and neurite outgrowth. Mediates netrin-1-induced F-actin-substrate coupling or 'clutch engagement' within the axon growth cone through activation of CDC42, RAC1 and PAK1-dependent signaling pathway, thereby converting the F-actin retrograde flow into traction forces, concomitantly with filopodium extension and axon outgrowth. Plays a role in cytoskeletal organization by regulating the subcellular localization of phosphoinositide 3-kinase (PI3K) activity at the axonal growth cone. Also plays a role in regenerative neurite outgrowth. In the developing cortex, cooperates with KIF20B to promote both the transition from the multipolar to the bipolar stage and the radial migration of cortical neurons from the ventricular zone toward the superficial layer of the neocortex. Involved in the accumulation of phosphatidylinositol 3,4,5-trisphosphate (PIP3) in the growth cone of primary hippocampal neurons. This chain is Shootin-1, found in Mus musculus (Mouse).